The primary structure comprises 273 residues: Large ribosomal subunit protein uL2 (273 aa).

Disordered regions lie at residues 28-53 (KPFAPLVEKNSKSGGRNNNGRITTRH) and 221-273 (RGTA…RRSK). Over residues 39–48 (KSGGRNNNGR) the composition is skewed to low complexity.

Belongs to the universal ribosomal protein uL2 family. Part of the 50S ribosomal subunit. Forms a bridge to the 30S subunit in the 70S ribosome.

Its function is as follows. One of the primary rRNA binding proteins. Required for association of the 30S and 50S subunits to form the 70S ribosome, for tRNA binding and peptide bond formation. It has been suggested to have peptidyltransferase activity; this is somewhat controversial. Makes several contacts with the 16S rRNA in the 70S ribosome. In Enterobacter sp. (strain 638), this protein is Large ribosomal subunit protein uL2.